A 370-amino-acid polypeptide reads, in one-letter code: Lipoyl synthase, mitochondrial (370 aa).

7 residues coordinate [4Fe-4S] cluster: cysteine 100, cysteine 105, cysteine 111, cysteine 131, cysteine 135, cysteine 138, and serine 346. The Radical SAM core domain occupies 116-335; that stretch reads DKSRATATIM…KEVAEKLGFL (220 aa).

The protein belongs to the radical SAM superfamily. Lipoyl synthase family. [4Fe-4S] cluster is required as a cofactor.

The protein localises to the mitochondrion. It carries out the reaction [[Fe-S] cluster scaffold protein carrying a second [4Fe-4S](2+) cluster] + N(6)-octanoyl-L-lysyl-[protein] + 2 oxidized [2Fe-2S]-[ferredoxin] + 2 S-adenosyl-L-methionine + 4 H(+) = [[Fe-S] cluster scaffold protein] + N(6)-[(R)-dihydrolipoyl]-L-lysyl-[protein] + 4 Fe(3+) + 2 hydrogen sulfide + 2 5'-deoxyadenosine + 2 L-methionine + 2 reduced [2Fe-2S]-[ferredoxin]. Its pathway is protein modification; protein lipoylation via endogenous pathway; protein N(6)-(lipoyl)lysine from octanoyl-[acyl-carrier-protein]: step 2/2. Catalyzes the radical-mediated insertion of two sulfur atoms into the C-6 and C-8 positions of the octanoyl moiety bound to the lipoyl domains of lipoate-dependent enzymes, thereby converting the octanoylated domains into lipoylated derivatives. The chain is Lipoyl synthase, mitochondrial (lip5) from Schizosaccharomyces pombe (strain 972 / ATCC 24843) (Fission yeast).